The primary structure comprises 297 residues: Phosphoribosylaminoimidazole-succinocarboxamide synthase (297 aa).

It belongs to the SAICAR synthetase family.

The enzyme catalyses 5-amino-1-(5-phospho-D-ribosyl)imidazole-4-carboxylate + L-aspartate + ATP = (2S)-2-[5-amino-1-(5-phospho-beta-D-ribosyl)imidazole-4-carboxamido]succinate + ADP + phosphate + 2 H(+). Its pathway is purine metabolism; IMP biosynthesis via de novo pathway; 5-amino-1-(5-phospho-D-ribosyl)imidazole-4-carboxamide from 5-amino-1-(5-phospho-D-ribosyl)imidazole-4-carboxylate: step 1/2. In Mycobacterium marinum (strain ATCC BAA-535 / M), this protein is Phosphoribosylaminoimidazole-succinocarboxamide synthase.